We begin with the raw amino-acid sequence, 224 residues long: Golgi to ER traffic protein 1 (224 aa).

The Lumenal portion of the chain corresponds to 1–33 (MDEAIIVDAEFVAPVGTTAGEFVPIDRAPAAGL). Residues 34 to 53 (LLLVAFVVLYAKVISKLGKP) form a helical membrane-spanning segment. At 54-137 (AIQEFLWEII…RFFTIISSAI (84 aa)) the chain is on the cytoplasmic side. Positions 102 to 124 (AKLDREYGKLKVEIEDINNLLTA) form a coiled coil. A helical transmembrane segment spans residues 138–158 (FLSTTGMKMFLRIKHRKAAIF). Residues 159-182 (WLPKNAFPYPIEYILSFSSAPLGS) are Lumenal-facing. The chain crosses the membrane as a helical span at residues 183 to 199 (VSVSAWLMICDAAMDLI). Residues 200–224 (VTIFVALVVGVIGMLRSNKVKPKTA) are Cytoplasmic-facing.

The protein belongs to the WRB/GET1 family. Component of the Golgi to ER traffic (GET) complex, which is composed of GET1, GET2 and GET3. Within the complex, GET1 and GET2 form a heterotetramer which is stabilized by phosphatidylinositol binding and which binds to the GET3 homodimer.

The protein resides in the endoplasmic reticulum membrane. The protein localises to the golgi apparatus membrane. In terms of biological role, required for the post-translational delivery of tail-anchored (TA) proteins to the endoplasmic reticulum. Together with GET2, acts as a membrane receptor for soluble GET3, which recognizes and selectively binds the transmembrane domain of TA proteins in the cytosol. The GET complex cooperates with the HDEL receptor ERD2 to mediate the ATP-dependent retrieval of resident ER proteins that contain a C-terminal H-D-E-L retention signal from the Golgi to the ER. This Yarrowia lipolytica (strain CLIB 122 / E 150) (Yeast) protein is Golgi to ER traffic protein 1.